We begin with the raw amino-acid sequence, 185 residues long: Ribosome-recycling factor (185 aa).

This sequence belongs to the RRF family.

It localises to the cytoplasm. Responsible for the release of ribosomes from messenger RNA at the termination of protein biosynthesis. May increase the efficiency of translation by recycling ribosomes from one round of translation to another. This Finegoldia magna (strain ATCC 29328 / DSM 20472 / WAL 2508) (Peptostreptococcus magnus) protein is Ribosome-recycling factor.